Here is a 478-residue protein sequence, read N- to C-terminus: Cytochrome c-552 (478 aa).

Positions 1–26 (MARKTLRARRFFSLIFPFFFITSVYA) are cleaved as a signal peptide. His-94 lines the heme c pocket. Heme is bound by residues Cys-122, Cys-125, and Lys-126. Residues Cys-160, Cys-163, His-164, Cys-209, Cys-212, and His-213 each contribute to the heme c site. Ca(2+) is bound by residues Glu-215, Tyr-216, Lys-261, and Gln-263. Tyr-216 contacts substrate. Residue His-264 coordinates substrate. The heme c site is built by His-275, Cys-282, Cys-285, His-286, His-301, Cys-314, Cys-317, His-318, and His-393.

The protein belongs to the cytochrome c-552 family. Requires Ca(2+) as cofactor. The cofactor is heme c.

It localises to the periplasm. It carries out the reaction 6 Fe(III)-[cytochrome c] + NH4(+) + 2 H2O = 6 Fe(II)-[cytochrome c] + nitrite + 8 H(+). The protein operates within nitrogen metabolism; nitrate reduction (assimilation). In terms of biological role, catalyzes the reduction of nitrite to ammonia, consuming six electrons in the process. The protein is Cytochrome c-552 of Salmonella paratyphi A (strain ATCC 9150 / SARB42).